The following is a 390-amino-acid chain: Elongation factor Tu 2 (390 aa).

A tr-type G domain is found at 10–201; that stretch reads KPHVNVGTIG…LDDYVEVPPR (192 aa). Positions 19 to 26 are G1; it reads GHVDHGKT. 19–26 serves as a coordination point for GTP; that stretch reads GHVDHGKT. Thr-26 lines the Mg(2+) pocket. Residues 55–59 form a G2 region; sequence GITIA. The segment at 76-79 is G3; it reads DCPG. GTP is bound by residues 76-80 and 131-134; these read DCPGH and NKAD. The segment at 131–134 is G4; the sequence is NKAD. Positions 168-170 are G5; the sequence is SAL.

It belongs to the TRAFAC class translation factor GTPase superfamily. Classic translation factor GTPase family. EF-Tu/EF-1A subfamily. In terms of assembly, monomer.

It is found in the cytoplasm. The enzyme catalyses GTP + H2O = GDP + phosphate + H(+). Its function is as follows. GTP hydrolase that promotes the GTP-dependent binding of aminoacyl-tRNA to the A-site of ribosomes during protein biosynthesis. The polypeptide is Elongation factor Tu 2 (Wolbachia sp. subsp. Brugia malayi (strain TRS)).